Reading from the N-terminus, the 469-residue chain is Uridine kinase-like protein 4 (469 aa).

The tract at residues 46-249 (QRQPFVIGVA…IVQHICTKLG (204 aa)) is uridine kinase. A uracil phosphoribosyltransferase region spans residues 259–469 (NLYVIHSTFQ…GDRYFGTDDD (211 aa)). GTP-binding positions include Lys283, Arg292, and 326–329 (CKRL). Residues Arg336 and Arg361 each coordinate 5-phospho-alpha-D-ribose 1-diphosphate. Arg381 serves as a coordination point for GTP. 5-phospho-alpha-D-ribose 1-diphosphate contacts are provided by residues Asp387, 392 to 395 (TGNS), and Glu458. 457–459 (GEF) lines the uracil pocket.

It in the N-terminal section; belongs to the uridine kinase family. In the C-terminal section; belongs to the UPRTase family. Requires Mg(2+) as cofactor.

The enzyme catalyses UMP + diphosphate = 5-phospho-alpha-D-ribose 1-diphosphate + uracil. It carries out the reaction cytidine + ATP = CMP + ADP + H(+). It catalyses the reaction uridine + ATP = UMP + ADP + H(+). The protein operates within pyrimidine metabolism; UMP biosynthesis via salvage pathway; UMP from uracil: step 1/1. Its pathway is pyrimidine metabolism; CTP biosynthesis via salvage pathway; CTP from cytidine: step 1/3. It functions in the pathway pyrimidine metabolism; UMP biosynthesis via salvage pathway; UMP from uridine: step 1/1. Its activity is regulated as follows. Allosterically activated by GTP. Involved in the pyrimidine salvage pathway. The uracil phosphoribosyltransferase (UPRT) activity, that catalyzes the conversion of uracil and 5-phospho-alpha-D-ribose 1-diphosphate (PRPP) to UMP and diphosphate, is unsure. The polypeptide is Uridine kinase-like protein 4 (UKL4) (Arabidopsis thaliana (Mouse-ear cress)).